Here is a 206-residue protein sequence, read N- to C-terminus: ATP-dependent dethiobiotin synthetase BioD (206 aa).

Residue 12–17 (GVGKTI) participates in ATP binding. Residue threonine 16 coordinates Mg(2+). Lysine 32 is a catalytic residue. Mg(2+) contacts are provided by histidine 46 and glutamate 98. 98–101 (EGAG) contributes to the ATP binding site.

This sequence belongs to the dethiobiotin synthetase family. In terms of assembly, homodimer. Mg(2+) serves as cofactor.

The protein localises to the cytoplasm. It carries out the reaction (7R,8S)-7,8-diammoniononanoate + CO2 + ATP = (4R,5S)-dethiobiotin + ADP + phosphate + 3 H(+). It participates in cofactor biosynthesis; biotin biosynthesis; biotin from 7,8-diaminononanoate: step 1/2. Catalyzes a mechanistically unusual reaction, the ATP-dependent insertion of CO2 between the N7 and N8 nitrogen atoms of 7,8-diaminopelargonic acid (DAPA, also called 7,8-diammoniononanoate) to form a ureido ring. This is ATP-dependent dethiobiotin synthetase BioD from Novosphingobium aromaticivorans (strain ATCC 700278 / DSM 12444 / CCUG 56034 / CIP 105152 / NBRC 16084 / F199).